A 153-amino-acid polypeptide reads, in one-letter code: Small ribosomal subunit protein uS9 (153 aa).

The interval 122-153 (KKAGFLTRDPRSTERKKYGLKKARKAPQYSKR) is disordered. Basic and acidic residues predominate over residues 129–138 (RDPRSTERKK). A compositionally biased stretch (basic residues) spans 139–153 (YGLKKARKAPQYSKR).

This sequence belongs to the universal ribosomal protein uS9 family.

This chain is Small ribosomal subunit protein uS9 (rpsI), found in Mycobacterium leprae (strain TN).